The sequence spans 191 residues: Orotate phosphoribosyltransferase (191 aa).

114–122 (EDVVTTGKS) contacts 5-phospho-alpha-D-ribose 1-diphosphate. Thr-118 and Arg-146 together coordinate orotate.

It belongs to the purine/pyrimidine phosphoribosyltransferase family. PyrE subfamily. As to quaternary structure, homodimer. It depends on Mg(2+) as a cofactor.

It carries out the reaction orotidine 5'-phosphate + diphosphate = orotate + 5-phospho-alpha-D-ribose 1-diphosphate. Its pathway is pyrimidine metabolism; UMP biosynthesis via de novo pathway; UMP from orotate: step 1/2. Functionally, catalyzes the transfer of a ribosyl phosphate group from 5-phosphoribose 1-diphosphate to orotate, leading to the formation of orotidine monophosphate (OMP). This chain is Orotate phosphoribosyltransferase, found in Clostridium botulinum (strain Kyoto / Type A2).